Here is a 710-residue protein sequence, read N- to C-terminus: Prolyl endopeptidase (710 aa).

Methionine 1 bears the N-acetylmethionine mark. Lysine 157 bears the N6-acetyllysine mark. Active-site charge relay system residues include serine 554, aspartate 641, and histidine 680.

Belongs to the peptidase S9A family. As to quaternary structure, monomer. In terms of processing, the N-terminus is blocked.

The protein localises to the cytoplasm. The catalysed reaction is Hydrolysis of Pro-|-Xaa &gt;&gt; Ala-|-Xaa in oligopeptides.. Functionally, cleaves peptide bonds on the C-terminal side of prolyl residues within peptides that are up to approximately 30 amino acids long. The polypeptide is Prolyl endopeptidase (PREP) (Homo sapiens (Human)).